The following is a 182-amino-acid chain: Adenine phosphoribosyltransferase (182 aa).

This sequence belongs to the purine/pyrimidine phosphoribosyltransferase family. In terms of assembly, homodimer.

It is found in the cytoplasm. The catalysed reaction is AMP + diphosphate = 5-phospho-alpha-D-ribose 1-diphosphate + adenine. Its pathway is purine metabolism; AMP biosynthesis via salvage pathway; AMP from adenine: step 1/1. In terms of biological role, catalyzes a salvage reaction resulting in the formation of AMP, that is energically less costly than de novo synthesis. In Pseudomonas syringae pv. syringae (strain B728a), this protein is Adenine phosphoribosyltransferase.